A 1004-amino-acid chain; its full sequence is UPF0182 protein Noca_1530 (1004 aa).

The disordered stretch occupies residues 1 to 20 (MSELFDEAPRDPGPPARSGS). The next 7 membrane-spanning stretches (helical) occupy residues 26–46 (LIVT…FAGI), 71–91 (VLFF…IYLA), 120–140 (TWLL…SAIG), 183–203 (MAVL…YGGI), 212–232 (LSGA…LAKA), 261–281 (VLPA…LFFV), and 293–313 (VGLA…PGIV). Disordered stretches follow at residues 899–924 (GVST…PPAT) and 974–1004 (LGQK…SPSS). Composition is skewed to low complexity over residues 903-916 (GPGT…QPGD) and 979-1004 (GSAG…SPSS).

This sequence belongs to the UPF0182 family.

It is found in the cell membrane. The sequence is that of UPF0182 protein Noca_1530 from Nocardioides sp. (strain ATCC BAA-499 / JS614).